Here is a 436-residue protein sequence, read N- to C-terminus: Arginine biosynthesis bifunctional protein ArgJ, mitochondrial (436 aa).

The substrate site is built by threonine 172, lysine 198, threonine 209, glutamate 298, asparagine 431, and serine 436. The active-site Nucleophile is the threonine 209.

It belongs to the ArgJ family. In terms of assembly, heterodimer of an alpha and a beta chain. In terms of processing, the alpha and beta chains are autoproteolytically processed from a single precursor protein within the mitochondrion.

It localises to the mitochondrion matrix. The catalysed reaction is N(2)-acetyl-L-ornithine + L-glutamate = N-acetyl-L-glutamate + L-ornithine. It carries out the reaction L-glutamate + acetyl-CoA = N-acetyl-L-glutamate + CoA + H(+). It participates in amino-acid biosynthesis; L-arginine biosynthesis; L-ornithine and N-acetyl-L-glutamate from L-glutamate and N(2)-acetyl-L-ornithine (cyclic): step 1/1. Its pathway is amino-acid biosynthesis; L-arginine biosynthesis; N(2)-acetyl-L-ornithine from L-glutamate: step 1/4. Catalyzes two activities which are involved in the cyclic version of arginine biosynthesis: the synthesis of acetylglutamate from glutamate and acetyl-CoA, and of ornithine by transacetylation between acetylornithine and glutamate. In Meyerozyma guilliermondii (strain ATCC 6260 / CBS 566 / DSM 6381 / JCM 1539 / NBRC 10279 / NRRL Y-324) (Yeast), this protein is Arginine biosynthesis bifunctional protein ArgJ, mitochondrial.